Here is a 267-residue protein sequence, read N- to C-terminus: Glucosamine-6-phosphate deaminase (267 aa).

D72 (proton acceptor; for enolization step) is an active-site residue. D141 acts as the For ring-opening step in catalysis. H143 acts as the Proton acceptor; for ring-opening step in catalysis. E148 serves as the catalytic For ring-opening step.

Belongs to the glucosamine/galactosamine-6-phosphate isomerase family. NagB subfamily. In terms of assembly, homohexamer.

The catalysed reaction is alpha-D-glucosamine 6-phosphate + H2O = beta-D-fructose 6-phosphate + NH4(+). The protein operates within amino-sugar metabolism; N-acetylneuraminate degradation; D-fructose 6-phosphate from N-acetylneuraminate: step 5/5. Allosterically activated by N-acetylglucosamine 6-phosphate (GlcNAc6P). Catalyzes the reversible isomerization-deamination of glucosamine 6-phosphate (GlcN6P) to form fructose 6-phosphate (Fru6P) and ammonium ion. The polypeptide is Glucosamine-6-phosphate deaminase (Actinobacillus pleuropneumoniae serotype 5b (strain L20)).